An 88-amino-acid chain; its full sequence is MEKKRIYLFCSAGMSTSLLVSKMKAQAEKYDVPVLIDAYPETLAGEKGQDADLVLLGPQIAYMLPEIQQQLPGKPVEVIDTLLYGKVD.

The PTS EIIB type-3 domain maps to 3 to 88; sequence KKRIYLFCSA…IDTLLYGKVD (86 aa). The active-site Phosphocysteine intermediate is Cys10. Cys10 bears the Phosphocysteine; by EIIA mark.

Its subcellular location is the cytoplasm. The enzyme catalyses D-cellobiose(out) + N(pros)-phospho-L-histidyl-[protein] = 6-phospho-beta-D-glucosyl-(1-&gt;4)-D-glucose(in) + L-histidyl-[protein]. Functionally, the phosphoenolpyruvate-dependent sugar phosphotransferase system (sugar PTS), a major carbohydrate active transport system, catalyzes the phosphorylation of incoming sugar substrates concomitantly with their translocation across the cell membrane. The enzyme II CelABD PTS system is involved in cellobiose transport. This Aeromonas hydrophila protein is PTS system cellobiose-specific EIIB component.